An 87-amino-acid polypeptide reads, in one-letter code: Translation initiation factor IF-1 2 (87 aa).

In terms of domain architecture, S1-like spans 1-72; that stretch reads MAKEEVIEME…TKGRINFRHK (72 aa).

It belongs to the IF-1 family. In terms of assembly, component of the 30S ribosomal translation pre-initiation complex which assembles on the 30S ribosome in the order IF-2 and IF-3, IF-1 and N-formylmethionyl-tRNA(fMet); mRNA recruitment can occur at any time during PIC assembly.

Its subcellular location is the cytoplasm. In terms of biological role, one of the essential components for the initiation of protein synthesis. Stabilizes the binding of IF-2 and IF-3 on the 30S subunit to which N-formylmethionyl-tRNA(fMet) subsequently binds. Helps modulate mRNA selection, yielding the 30S pre-initiation complex (PIC). Upon addition of the 50S ribosomal subunit IF-1, IF-2 and IF-3 are released leaving the mature 70S translation initiation complex. The sequence is that of Translation initiation factor IF-1 2 from Thiobacillus denitrificans (strain ATCC 25259 / T1).